Here is an 87-residue protein sequence, read N- to C-terminus: Small ribosomal subunit protein bS18 (87 aa).

It belongs to the bacterial ribosomal protein bS18 family. As to quaternary structure, part of the 30S ribosomal subunit. Forms a tight heterodimer with protein bS6.

Functionally, binds as a heterodimer with protein bS6 to the central domain of the 16S rRNA, where it helps stabilize the platform of the 30S subunit. In Oleidesulfovibrio alaskensis (strain ATCC BAA-1058 / DSM 17464 / G20) (Desulfovibrio alaskensis), this protein is Small ribosomal subunit protein bS18.